A 524-amino-acid chain; its full sequence is Lysine--tRNA ligase (524 aa).

Mg(2+) is bound by residues Glu431 and Glu438.

The protein belongs to the class-II aminoacyl-tRNA synthetase family. In terms of assembly, homodimer. It depends on Mg(2+) as a cofactor.

The protein resides in the cytoplasm. It catalyses the reaction tRNA(Lys) + L-lysine + ATP = L-lysyl-tRNA(Lys) + AMP + diphosphate. This Chlamydia muridarum (strain MoPn / Nigg) protein is Lysine--tRNA ligase (lysS).